The sequence spans 126 residues: MQLNMLKCKLHQACVTDTELDYEGSCAIDANLMDAAGIREFEQIHVYNLANGARFTTYAIRGEAGSRMISMNGAAAHLCSEGDRIIICCYANVDESELDRHEPALVYCDGDNRITHQRNGIPLQVA.

Serine 25 acts as the Schiff-base intermediate with substrate; via pyruvic acid in catalysis. At serine 25 the chain carries Pyruvic acid (Ser). Position 57 (threonine 57) interacts with substrate. The Proton donor role is filled by tyrosine 58. 73–75 (GAA) contributes to the substrate binding site.

It belongs to the PanD family. In terms of assembly, heterooctamer of four alpha and four beta subunits. Requires pyruvate as cofactor. Post-translationally, is synthesized initially as an inactive proenzyme, which is activated by self-cleavage at a specific serine bond to produce a beta-subunit with a hydroxyl group at its C-terminus and an alpha-subunit with a pyruvoyl group at its N-terminus.

The protein resides in the cytoplasm. The enzyme catalyses L-aspartate + H(+) = beta-alanine + CO2. The protein operates within cofactor biosynthesis; (R)-pantothenate biosynthesis; beta-alanine from L-aspartate: step 1/1. Its function is as follows. Catalyzes the pyruvoyl-dependent decarboxylation of aspartate to produce beta-alanine. The sequence is that of Aspartate 1-decarboxylase from Alkalilimnicola ehrlichii (strain ATCC BAA-1101 / DSM 17681 / MLHE-1).